Reading from the N-terminus, the 217-residue chain is Vesicle-associated membrane protein 723 (217 aa).

Residues 1–192 (MAQQSLFYSF…KWFQNMKIKL (192 aa)) lie on the Cytoplasmic side of the membrane. The Longin domain maps to 10-114 (FIARGTVILV…SLNKEFGSNL (105 aa)). A v-SNARE coiled-coil homology domain is found at 130-186 (NLAKAKAQVSEVKSLMMENIEKVLARGVICEMLGSSESQPQAFYIKRTQMKRKKWFQ). The helical; Anchor for type IV membrane protein transmembrane segment at 193–213 (IVLAIIIALILIIILSVCGGF) threads the bilayer. Topologically, residues 214–217 (NCGK) are vesicular.

Belongs to the synaptobrevin family. In terms of tissue distribution, highly expressed in stems and roots. Detected in flowers and leaves.

The protein resides in the endoplasmic reticulum membrane. Functionally, involved in the targeting and/or fusion of transport vesicles to their target membrane. The protein is Vesicle-associated membrane protein 723 of Arabidopsis thaliana (Mouse-ear cress).